Here is a 315-residue protein sequence, read N- to C-terminus: Diacylglycerol kinase (315 aa).

The region spanning 1–132 (MRKRARIIYN…VDIGKMNNRY (132 aa)) is the DAGKc domain. Residues 10 to 14 (NPTSG), Thr-41, 67 to 73 (GDGTLNE), and Thr-94 contribute to the ATP site. Mg(2+)-binding residues include Lys-213, Asp-216, and Tyr-218. Residue Glu-273 is the Proton acceptor of the active site.

It belongs to the diacylglycerol/lipid kinase family. As to quaternary structure, homodimer. It depends on Mg(2+) as a cofactor.

It catalyses the reaction a 1,2-diacyl-sn-glycerol + ATP = a 1,2-diacyl-sn-glycero-3-phosphate + ADP + H(+). Catalyzes the phosphorylation of diacylglycerol (DAG) into phosphatidic acid. Is a key enzyme involved in the production of lipoteichoic acid by reintroducing DAG formed from the breakdown of membrane phospholipids into the phosphatidylglycerol biosynthetic pathway. This Staphylococcus aureus (strain MRSA252) protein is Diacylglycerol kinase (dagK).